The chain runs to 398 residues: Protochlorophyllide reductase, chloroplastic (398 aa).

The protein belongs to the short-chain dehydrogenases/reductases (SDR) family. POR subfamily.

It is found in the plastid. Its subcellular location is the chloroplast. The catalysed reaction is chlorophyllide a + NADP(+) = protochlorophyllide a + NADPH + H(+). Its pathway is porphyrin-containing compound metabolism; chlorophyll biosynthesis. Functionally, phototransformation of protochlorophyllide (Pchlide) to chlorophyllide (Chlide). The sequence is that of Protochlorophyllide reductase, chloroplastic (POR1) from Daucus carota (Wild carrot).